The chain runs to 193 residues: Adenylate kinase (193 aa).

Position 10-15 (10-15 (GAGKGT)) interacts with ATP. Residues 30–59 (STGDMLRAAVKAGTPIGLKAKAVMDAGGLV) form an NMP region. AMP is bound by residues Thr31, Arg36, 57–59 (GLV), 85–88 (GFPR), and Gln92. Residues 126–142 (KRAKETLAAGGTVRADD) form an LID region. An ATP-binding site is contributed by Arg127. AMP is bound by residues Arg139 and Arg150. Ala178 provides a ligand contact to ATP.

Belongs to the adenylate kinase family. Monomer.

Its subcellular location is the cytoplasm. It carries out the reaction AMP + ATP = 2 ADP. The protein operates within purine metabolism; AMP biosynthesis via salvage pathway; AMP from ADP: step 1/1. Its function is as follows. Catalyzes the reversible transfer of the terminal phosphate group between ATP and AMP. Plays an important role in cellular energy homeostasis and in adenine nucleotide metabolism. This Beijerinckia indica subsp. indica (strain ATCC 9039 / DSM 1715 / NCIMB 8712) protein is Adenylate kinase.